The chain runs to 496 residues: Glycylpeptide N-tetradecanoyltransferase 1 (496 aa).

Residues 1 to 82 are disordered; it reads MADESETAVK…STQDQPVKMT (82 aa). Ser31 and Ser47 each carry phosphoserine. Positions 55-66 are enriched in basic residues; that stretch reads KKKKKKQKKKKE. A Phosphoserine modification is found at Ser83. The tetradecanoyl-CoA site is built by Gln118, Phe119, Trp120, Phe247, Leu248, Cys249, Val250, Ser256, Arg258, Val259, and Ala260.

Belongs to the NMT family. As to expression, ubiquitous.

It localises to the cytoplasm. The protein localises to the cytosol. The protein resides in the membrane. It catalyses the reaction N-terminal glycyl-[protein] + tetradecanoyl-CoA = N-tetradecanoylglycyl-[protein] + CoA + H(+). It carries out the reaction N-terminal glycyl-L-lysyl-[protein] + tetradecanoyl-CoA = N-terminal glycyl-(N(6)-tetradecanoyl)-L-lysyl-[protein] + CoA + H(+). In terms of biological role, adds a myristoyl group to the N-terminal glycine residue of certain cellular and viral proteins. Also able to mediate N-terminal lysine myristoylation of proteins: catalyzes myristoylation of ARF6 on both 'Gly-2' and 'Lys-3'. Lysine myristoylation is required to maintain ARF6 on membranes during the GTPase cycle. Required for normal embryogenesis. The chain is Glycylpeptide N-tetradecanoyltransferase 1 from Mus musculus (Mouse).